The chain runs to 417 residues: uncharacterized protein (417 aa).

Disordered regions lie at residues 44–83 (FTNE…VRSR) and 325–346 (VQSA…PPKE). Residues 54 to 64 (SNYSTSGYDSS) show a composition bias toward low complexity. Residues 65–76 (AETISANSSPIN) are compositionally biased toward polar residues. Residues 326–339 (QSARKNQKKGRKNR) are compositionally biased toward basic residues. The helical transmembrane segment at 362–382 (FLIIGVYVLVFIYVCTNVLTV) threads the bilayer.

Its subcellular location is the membrane. This is an uncharacterized protein from Caenorhabditis elegans.